The following is a 349-amino-acid chain: Anthranilate phosphoribosyltransferase (349 aa).

5-phospho-alpha-D-ribose 1-diphosphate contacts are provided by residues G87, 90-91 (GD), T95, 97-100 (NIST), 115-123 (KHGNRSVSS), and S127. Residue G87 coordinates anthranilate. S99 is a binding site for Mg(2+). Anthranilate is bound at residue N118. Position 173 (R173) interacts with anthranilate. Residues D231 and E232 each coordinate Mg(2+).

Belongs to the anthranilate phosphoribosyltransferase family. In terms of assembly, homodimer. Requires Mg(2+) as cofactor.

The enzyme catalyses N-(5-phospho-beta-D-ribosyl)anthranilate + diphosphate = 5-phospho-alpha-D-ribose 1-diphosphate + anthranilate. It participates in amino-acid biosynthesis; L-tryptophan biosynthesis; L-tryptophan from chorismate: step 2/5. Functionally, catalyzes the transfer of the phosphoribosyl group of 5-phosphorylribose-1-pyrophosphate (PRPP) to anthranilate to yield N-(5'-phosphoribosyl)-anthranilate (PRA). In Shewanella loihica (strain ATCC BAA-1088 / PV-4), this protein is Anthranilate phosphoribosyltransferase.